We begin with the raw amino-acid sequence, 615 residues long: RNA polymerase sigma factor RpoD (615 aa).

The segment at 166–216 (GYIDPDDGITPPAAEVPPPVDTKTAKADDDSEDEEAEATEDEEEAESGPDP) is disordered. The segment covering 194-212 (DDSEDEEAEATEDEEEAES) has biased composition (acidic residues). The interval 381 to 451 (MVEANLRLVI…TRSIADQART (71 aa)) is sigma-70 factor domain-2. Residues 405-408 (DLIQ) carry the Interaction with polymerase core subunit RpoC motif. Residues 460 to 536 (ETINKLNRIS…DSTMQSPIDV (77 aa)) form a sigma-70 factor domain-3 region. The interval 549 to 602 (VLSGLTAREAKVLRMRFGIDMNTDHTLEEVGKQFDVTRERIRQIEAKALRKLRH) is sigma-70 factor domain-4. Residues 575 to 594 (LEEVGKQFDVTRERIRQIEA) constitute a DNA-binding region (H-T-H motif).

The protein belongs to the sigma-70 factor family. RpoD/SigA subfamily. In terms of assembly, interacts transiently with the RNA polymerase catalytic core.

The protein resides in the cytoplasm. Functionally, sigma factors are initiation factors that promote the attachment of RNA polymerase to specific initiation sites and are then released. This sigma factor is the primary sigma factor during exponential growth. This is RNA polymerase sigma factor RpoD from Pseudomonas protegens (strain DSM 19095 / LMG 27888 / CFBP 6595 / CHA0).